The chain runs to 307 residues: Ornithine carbamoyltransferase (307 aa).

Residues 51 to 54 (STRT), Gln-78, Arg-102, and 129 to 132 (HPVQ) each bind carbamoyl phosphate. L-ornithine-binding positions include Asn-159, Asp-223, and 227–228 (SM). Residues 263 to 264 (CL) and Arg-291 each bind carbamoyl phosphate.

This sequence belongs to the aspartate/ornithine carbamoyltransferase superfamily. OTCase family.

It localises to the cytoplasm. The catalysed reaction is carbamoyl phosphate + L-ornithine = L-citrulline + phosphate + H(+). The protein operates within amino-acid biosynthesis; L-arginine biosynthesis; L-arginine from L-ornithine and carbamoyl phosphate: step 1/3. Functionally, reversibly catalyzes the transfer of the carbamoyl group from carbamoyl phosphate (CP) to the N(epsilon) atom of ornithine (ORN) to produce L-citrulline. The polypeptide is Ornithine carbamoyltransferase (Wolinella succinogenes (strain ATCC 29543 / DSM 1740 / CCUG 13145 / JCM 31913 / LMG 7466 / NCTC 11488 / FDC 602W) (Vibrio succinogenes)).